Reading from the N-terminus, the 186-residue chain is Ribosome-recycling factor (186 aa).

This sequence belongs to the RRF family.

It is found in the cytoplasm. In terms of biological role, responsible for the release of ribosomes from messenger RNA at the termination of protein biosynthesis. May increase the efficiency of translation by recycling ribosomes from one round of translation to another. The protein is Ribosome-recycling factor of Rickettsia canadensis (strain McKiel).